Consider the following 280-residue polypeptide: 2-dehydro-3-deoxyphosphooctonate aldolase (280 aa).

It belongs to the KdsA family.

It is found in the cytoplasm. The catalysed reaction is D-arabinose 5-phosphate + phosphoenolpyruvate + H2O = 3-deoxy-alpha-D-manno-2-octulosonate-8-phosphate + phosphate. It functions in the pathway carbohydrate biosynthesis; 3-deoxy-D-manno-octulosonate biosynthesis; 3-deoxy-D-manno-octulosonate from D-ribulose 5-phosphate: step 2/3. The protein operates within bacterial outer membrane biogenesis; lipopolysaccharide biosynthesis. This Colwellia psychrerythraea (strain 34H / ATCC BAA-681) (Vibrio psychroerythus) protein is 2-dehydro-3-deoxyphosphooctonate aldolase.